The primary structure comprises 157 residues: Small ribosomal subunit protein uS7 (157 aa).

Belongs to the universal ribosomal protein uS7 family. As to quaternary structure, part of the 30S ribosomal subunit. Contacts proteins S9 and S11.

One of the primary rRNA binding proteins, it binds directly to 16S rRNA where it nucleates assembly of the head domain of the 30S subunit. Is located at the subunit interface close to the decoding center, probably blocks exit of the E-site tRNA. In Caldicellulosiruptor bescii (strain ATCC BAA-1888 / DSM 6725 / KCTC 15123 / Z-1320) (Anaerocellum thermophilum), this protein is Small ribosomal subunit protein uS7.